A 232-amino-acid polypeptide reads, in one-letter code: Ribonuclease HII (232 aa).

Residues 26-218 form the RNase H type-2 domain; sequence RILCGVDEAG…VRRALEGMSA (193 aa). Residues Asp-32, Glu-33, and Asp-127 each coordinate a divalent metal cation.

This sequence belongs to the RNase HII family. Mn(2+) is required as a cofactor. The cofactor is Mg(2+).

The protein resides in the cytoplasm. It carries out the reaction Endonucleolytic cleavage to 5'-phosphomonoester.. Its function is as follows. Endonuclease that specifically degrades the RNA of RNA-DNA hybrids. The chain is Ribonuclease HII from Ralstonia pickettii (strain 12J).